The sequence spans 421 residues: Alpha-tubulin N-acetyltransferase 1 (421 aa).

An N-acetyltransferase domain is found at 1-190 (MEFPFDVDAL…NNFVIFEGFF (190 aa)). An N6-acetyllysine; by autocatalysis modification is found at Lys-56. 124–137 (FYIHESVQRHGHGR) is an acetyl-CoA binding site. Lys-146 carries the post-translational modification N6-acetyllysine; by autocatalysis. An acetyl-CoA-binding site is contributed by 160-169 (SPKLLKFLNK). Residues 214–235 (PIPAAPARKLPPKRAEGDIKPY) form a disordered region. A compositionally biased stretch (basic and acidic residues) spans 226–235 (KRAEGDIKPY). N6-acetyllysine; by autocatalysis is present on residues Lys-233 and Lys-244. The segment at 252 to 284 (PLNRAPRRATPPAHPPPRSSSLGNSPDRGPLRP) is disordered. Ser-272 and Ser-276 each carry phosphoserine. Arg-305 carries the asymmetric dimethylarginine modification. Ser-315 is modified (phosphoserine). The residue at position 323 (Arg-323) is an Omega-N-methylarginine. Positions 342–351 (FNTSFLGTGN) are enriched in polar residues. A disordered region spans residues 342-398 (FNTSFLGTGNQERKQGEQEAEDRSASEDQVLLQDGSGEEPTHTVAPRAQAPPAQSWM). Basic and acidic residues predominate over residues 352–367 (QERKQGEQEAEDRSAS).

The protein belongs to the acetyltransferase ATAT1 family. Component of the BBSome complex. Interacts with AP2 alpha-adaptins, including AP2A2, but not with AP1 gamma-adaptin (AP1G1/AP1G2); this interaction is required for efficient alpha-tubulin acetylation, hence clathrin-coated pits are sites of microtubule acetylation. In terms of processing, autoacetylation strongly increases tubulin acetylation.

Its subcellular location is the cytoplasm. The protein localises to the membrane. The protein resides in the clathrin-coated pit. It is found in the cell junction. It localises to the focal adhesion. Its subcellular location is the cell projection. The protein localises to the axon. The protein resides in the cytoskeleton. It is found in the spindle. It catalyses the reaction L-lysyl-[alpha-tubulin] + acetyl-CoA = N(6)-acetyl-L-lysyl-[alpha-tubulin] + CoA + H(+). Specifically acetylates 'Lys-40' in alpha-tubulin on the lumenal side of microtubules. Promotes microtubule destabilization and accelerates microtubule dynamics; this activity may be independent of acetylation activity. Acetylates alpha-tubulin with a slow enzymatic rate, due to a catalytic site that is not optimized for acetyl transfer. Enters the microtubule through each end and diffuses quickly throughout the lumen of microtubules. Acetylates only long/old microtubules because of its slow acetylation rate since it does not have time to act on dynamically unstable microtubules before the enzyme is released. Required for normal sperm flagellar function. Promotes directional cell locomotion and chemotaxis, through AP2A2-dependent acetylation of alpha-tubulin at clathrin-coated pits that are concentrated at the leading edge of migrating cells. May facilitate primary cilium assembly. The chain is Alpha-tubulin N-acetyltransferase 1 from Rattus norvegicus (Rat).